We begin with the raw amino-acid sequence, 490 residues long: Cobyric acid synthase (490 aa).

The GATase cobBQ-type domain maps to 250–432 (QLEIVVIRLP…LHGLLDNHAW (183 aa)). Catalysis depends on Cys-328, which acts as the Nucleophile. The active site involves His-424.

The protein belongs to the CobB/CobQ family. CobQ subfamily.

The protein operates within cofactor biosynthesis; adenosylcobalamin biosynthesis. Functionally, catalyzes amidations at positions B, D, E, and G on adenosylcobyrinic A,C-diamide. NH(2) groups are provided by glutamine, and one molecule of ATP is hydrogenolyzed for each amidation. The polypeptide is Cobyric acid synthase (Gloeobacter violaceus (strain ATCC 29082 / PCC 7421)).